Reading from the N-terminus, the 466-residue chain is MGKTLYEKVYEAHVAVAAEGETPILYIDRHLVHEVTSPQAFDGLREKGRQVRQVSKTFATMDHNVSTTTKDINASGEMARIQMETLIKNCQEFGVTLYDINHKYQGIVHVMGPELGITLPGMTIVCGDSHTATHGAFGSLAFGIGTSEVEHVLATQTLKQARAKTMKIEVQGKVADGITAKDIVLAIIGKTTAAGGTGYVVEFCGEAITDLSMEGRMTVCNMAIELGAKAGLIAPDQTTFDYIKGRKFAPTGADWDAAVEYWKTLKTDEDAKFDAVVTLNAADIKPQVTWGTNPGQVIAVDEPIPAPESFSDPVEKASAEKALAYMGLEAGKSLSEYKVDKVFVGSCTNSRIEDMRAAAVVAKGRKVASHVQALIVPGSEQVKAQAEAEGLDVIFKEAGFEWRLPGCSMCLAMNNDRLGPHERCASTSNRNFEGRQGRDGRTHLVSPAMAAAAAIAGHFVDIRDWK.

Positions 347, 407, and 410 each coordinate [4Fe-4S] cluster.

Belongs to the aconitase/IPM isomerase family. LeuC type 1 subfamily. In terms of assembly, heterodimer of LeuC and LeuD. [4Fe-4S] cluster serves as cofactor.

It catalyses the reaction (2R,3S)-3-isopropylmalate = (2S)-2-isopropylmalate. It functions in the pathway amino-acid biosynthesis; L-leucine biosynthesis; L-leucine from 3-methyl-2-oxobutanoate: step 2/4. Catalyzes the isomerization between 2-isopropylmalate and 3-isopropylmalate, via the formation of 2-isopropylmaleate. This is 3-isopropylmalate dehydratase large subunit from Vibrio vulnificus (strain CMCP6).